The sequence spans 354 residues: Squamosa promoter-binding-like protein 15 (354 aa).

A disordered region spans residues 1-25 (MELLMCSGQAESGGSSSTESSSLSG). The span at 7 to 25 (SGQAESGGSSSTESSSLSG) shows a compositional bias: low complexity. The SBP-type zinc-finger motif lies at 56 to 133 (TARCQVEGCR…ACHNERRRKP (78 aa)). Residues C59, C64, C81, H84, C100, C103, H107, and C119 each coordinate Zn(2+). Residues 116–132 (KRSCRRRLACHNERRRK) carry the Bipartite nuclear localization signal motif.

Zn(2+) serves as cofactor.

The protein resides in the nucleus. Its function is as follows. Trans-acting factor that binds specifically to the consensus nucleotide sequence 5'-TNCGTACAA-3'. This is Squamosa promoter-binding-like protein 15 (SPL15) from Arabidopsis thaliana (Mouse-ear cress).